A 341-amino-acid chain; its full sequence is GTPase Obg (341 aa).

One can recognise an Obg domain in the interval 1–159; it reads MKFVDEALIK…RNLRLELRVL (159 aa). The interval 128–150 is disordered; it reads TRYKSSVNRSPRQTTPGSPGESR. A compositionally biased stretch (polar residues) spans 129–144; sequence RYKSSVNRSPRQTTPG. Positions 160–334 constitute an OBG-type G domain; the sequence is ADVGLLGLPN…LCYALMQLID (175 aa). Residues 166-173, 191-195, 213-216, 283-286, and 315-317 contribute to the GTP site; these read GLPNAGKS, FTTLH, DIPG, NKID, and SAI. Mg(2+) contacts are provided by Ser-173 and Thr-193.

This sequence belongs to the TRAFAC class OBG-HflX-like GTPase superfamily. OBG GTPase family. As to quaternary structure, monomer. It depends on Mg(2+) as a cofactor.

It is found in the cytoplasm. Functionally, an essential GTPase which binds GTP, GDP and possibly (p)ppGpp with moderate affinity, with high nucleotide exchange rates and a fairly low GTP hydrolysis rate. Plays a role in control of the cell cycle, stress response, ribosome biogenesis and in those bacteria that undergo differentiation, in morphogenesis control. This chain is GTPase Obg, found in Legionella pneumophila subsp. pneumophila (strain Philadelphia 1 / ATCC 33152 / DSM 7513).